The primary structure comprises 504 residues: uncharacterized protein (504 aa).

The protein to M.thermoautotrophicum MTH1137.

This is an uncharacterized protein from Methanocaldococcus jannaschii (strain ATCC 43067 / DSM 2661 / JAL-1 / JCM 10045 / NBRC 100440) (Methanococcus jannaschii).